We begin with the raw amino-acid sequence, 248 residues long: 2,3-bisphosphoglycerate-dependent phosphoglycerate mutase (248 aa).

Substrate contacts are provided by residues 8 to 15, 21 to 22, R60, 87 to 90, K98, 114 to 115, and 183 to 184; these read RHGESTWN, TG, ERHY, RR, and GN. Residue H9 is the Tele-phosphohistidine intermediate of the active site. Residue E87 is the Proton donor/acceptor of the active site.

This sequence belongs to the phosphoglycerate mutase family. BPG-dependent PGAM subfamily. In terms of assembly, homodimer.

It carries out the reaction (2R)-2-phosphoglycerate = (2R)-3-phosphoglycerate. The protein operates within carbohydrate degradation; glycolysis; pyruvate from D-glyceraldehyde 3-phosphate: step 3/5. Functionally, catalyzes the interconversion of 2-phosphoglycerate and 3-phosphoglycerate. In Burkholderia ambifaria (strain ATCC BAA-244 / DSM 16087 / CCUG 44356 / LMG 19182 / AMMD) (Burkholderia cepacia (strain AMMD)), this protein is 2,3-bisphosphoglycerate-dependent phosphoglycerate mutase.